We begin with the raw amino-acid sequence, 251 residues long: Developmental protein SEPALLATA 1 (251 aa).

Positions 3–57 (RGRVELKRIENKINRQVTFAKRRNGLLKKAYELSVLCDAEVALIIFSNRGKLYEF) constitute an MADS-box domain. A coiled-coil region spans residues 85–176 (AKELENSYRE…ALAMKLDDMI (92 aa)). Residues 88-178 (LENSYREYLK…AMKLDDMIGV (91 aa)) form the K-box domain.

In terms of assembly, heterodimer with AGAMOUS capable of binding to CArG-box sequences. Interacts with AGL16. Interacts with TT16/AGL32. Expressed mainly in carpels, and weakly in stamens.

It localises to the nucleus. Probable transcription factor. Functions with SEPALLATA2/AGL4 and SEPALLATA3/AGL9 to ensure proper development of petals, stamens and carpels, and to prevent the indeterminate growth of the flower meristem. Forms a heterodimer via the K-box domain with AGAMOUS, that could be involved in genes regulation during floral meristem development. The chain is Developmental protein SEPALLATA 1 (SEP1) from Arabidopsis thaliana (Mouse-ear cress).